Reading from the N-terminus, the 165-residue chain is Lithostathine-1 (165 aa).

Residues 1-21 (MARNAYFILLSCLIVLSPSQG) form the signal peptide. A Pyrrolidone carboxylic acid modification is found at glutamine 22. The C-type lectin domain maps to 33–163 (ISCPEGSNAY…DAQYSFVCKF (131 aa)). Disulfide bonds link cysteine 35–cysteine 46, cysteine 63–cysteine 161, and cysteine 136–cysteine 153. Asparagine 129 carries an N-linked (GlcNAc...) asparagine glycan.

In terms of tissue distribution, expressed only in regenerating islets and normal exocrine pancreas, but not in normal pancreatic islets. Expressed strongly in pancreas, moderately in gall bladder, and weakly in liver.

The protein resides in the secreted. In terms of biological role, might act as an inhibitor of spontaneous calcium carbonate precipitation. This chain is Lithostathine-1 (Reg1), found in Mus musculus (Mouse).